Reading from the N-terminus, the 272-residue chain is MSTIAESARIHPMAVVEDGAVIGEGVKIGPFCHVGPHVVLHENVELLSHAVVAGRTVIGKGTRIFPMAVIGGDPQSVHHGGEETTLSVGANCTMREGVTMNTGTADFGGQTIVGDNNLFLANSHVAHDCKVGNHVIMSNNVMLAGHVVIEDRVILGGGSAVHQFTRVGRQAFVGGLSAVSYDVIPYGMLNGNPGLLSGLNVVGMTRAGVDRAVIHRVRRAYKSIFEGTGSVRENAAAIRDEYADCEQAVQILDFIAADSDRALSSPTRGQKG.

The protein belongs to the transferase hexapeptide repeat family. LpxA subfamily. In terms of assembly, homotrimer.

The protein resides in the cytoplasm. The catalysed reaction is a (3R)-hydroxyacyl-[ACP] + UDP-N-acetyl-alpha-D-glucosamine = a UDP-3-O-[(3R)-3-hydroxyacyl]-N-acetyl-alpha-D-glucosamine + holo-[ACP]. It participates in glycolipid biosynthesis; lipid IV(A) biosynthesis; lipid IV(A) from (3R)-3-hydroxytetradecanoyl-[acyl-carrier-protein] and UDP-N-acetyl-alpha-D-glucosamine: step 1/6. In terms of biological role, involved in the biosynthesis of lipid A, a phosphorylated glycolipid that anchors the lipopolysaccharide to the outer membrane of the cell. In Rhizobium leguminosarum bv. trifolii (strain WSM2304), this protein is Acyl-[acyl-carrier-protein]--UDP-N-acetylglucosamine O-acyltransferase.